The primary structure comprises 377 residues: Geranylgeranyl transferase type-1 subunit beta (377 aa).

PFTB repeat units follow at residues 144–186 (KEAC…YMLN), 193–234 (MKKA…CLMG), 245–284 (LNRI…KLLK), and 291–333 (FEKN…SLME). Residues 219 to 221 (HGG) and 263 to 266 (RPNK) contribute to the geranylgeranyl diphosphate site. D269 and C271 together coordinate Zn(2+). 272–275 (YSFW) contacts geranylgeranyl diphosphate. Position 321 (H321) interacts with Zn(2+).

It belongs to the protein prenyltransferase subunit beta family. As to quaternary structure, heterodimer of FNTA and PGGT1B. PGGT1B mediates interaction with substrate peptides. Zn(2+) is required as a cofactor. It depends on Mg(2+) as a cofactor.

The enzyme catalyses geranylgeranyl diphosphate + L-cysteinyl-[protein] = S-geranylgeranyl-L-cysteinyl-[protein] + diphosphate. Its function is as follows. Catalyzes the transfer of a geranyl-geranyl moiety from geranyl-geranyl pyrophosphate to a cysteine at the fourth position from the C-terminus of proteins having the C-terminal sequence Cys-aliphatic-aliphatic-X. Known substrates include RAC1, RAC2, RAP1A and RAP1B. This is Geranylgeranyl transferase type-1 subunit beta (PGGT1B) from Bos taurus (Bovine).